A 294-amino-acid chain; its full sequence is Negative regulator of the PHO system (294 aa).

A Protein kinase domain is found at 7-289; the sequence is FQQLEKLGEG…ARQSLEHPWF (283 aa). Residues 13-21 and lysine 36 contribute to the ATP site; that span reads LGEGTYATV. Catalysis depends on aspartate 130, which acts as the Proton acceptor.

This sequence belongs to the protein kinase superfamily. CMGC Ser/Thr protein kinase family. CDC2/CDKX subfamily. In terms of assembly, interacts with a number of cyclins.

The catalysed reaction is L-seryl-[protein] + ATP = O-phospho-L-seryl-[protein] + ADP + H(+). It carries out the reaction L-threonyl-[protein] + ATP = O-phospho-L-threonyl-[protein] + ADP + H(+). In terms of biological role, when phosphate concentrations are high it phosphorylates the PHO4 transcription factor thus establishing repression. This is Negative regulator of the PHO system (PHO85) from Yarrowia lipolytica (strain CLIB 122 / E 150) (Yeast).